The following is a 213-amino-acid chain: Mite allergen Der f 7 (213 aa).

Positions 1 to 17 (MMKFLLIAAVAFVAVSA) are cleaved as a signal peptide. N-linked (GlcNAc...) asparagine glycosylation is present at N151.

It belongs to the mite group 7 allergen family.

It is found in the secreted. This is Mite allergen Der f 7 (DERF7) from Dermatophagoides farinae (American house dust mite).